Reading from the N-terminus, the 291-residue chain is ATP synthase gamma chain (291 aa).

This sequence belongs to the ATPase gamma chain family. In terms of assembly, F-type ATPases have 2 components, CF(1) - the catalytic core - and CF(0) - the membrane proton channel. CF(1) has five subunits: alpha(3), beta(3), gamma(1), delta(1), epsilon(1). CF(0) has three main subunits: a, b and c.

The protein localises to the cell inner membrane. Functionally, produces ATP from ADP in the presence of a proton gradient across the membrane. The gamma chain is believed to be important in regulating ATPase activity and the flow of protons through the CF(0) complex. This Roseobacter denitrificans (strain ATCC 33942 / OCh 114) (Erythrobacter sp. (strain OCh 114)) protein is ATP synthase gamma chain.